We begin with the raw amino-acid sequence, 215 residues long: N-(5'-phosphoribosyl)anthranilate isomerase (215 aa).

This sequence belongs to the TrpF family.

It catalyses the reaction N-(5-phospho-beta-D-ribosyl)anthranilate = 1-(2-carboxyphenylamino)-1-deoxy-D-ribulose 5-phosphate. The protein operates within amino-acid biosynthesis; L-tryptophan biosynthesis; L-tryptophan from chorismate: step 3/5. This is N-(5'-phosphoribosyl)anthranilate isomerase from Paramagnetospirillum magneticum (strain ATCC 700264 / AMB-1) (Magnetospirillum magneticum).